A 487-amino-acid chain; its full sequence is Glutamyl-tRNA(Gln) amidotransferase subunit A (487 aa).

Catalysis depends on charge relay system residues Lys79 and Ser158. Ser182 (acyl-ester intermediate) is an active-site residue.

It belongs to the amidase family. GatA subfamily. Heterotrimer of A, B and C subunits.

The enzyme catalyses L-glutamyl-tRNA(Gln) + L-glutamine + ATP + H2O = L-glutaminyl-tRNA(Gln) + L-glutamate + ADP + phosphate + H(+). Functionally, allows the formation of correctly charged Gln-tRNA(Gln) through the transamidation of misacylated Glu-tRNA(Gln) in organisms which lack glutaminyl-tRNA synthetase. The reaction takes place in the presence of glutamine and ATP through an activated gamma-phospho-Glu-tRNA(Gln). The protein is Glutamyl-tRNA(Gln) amidotransferase subunit A of Ehrlichia ruminantium (strain Gardel).